We begin with the raw amino-acid sequence, 542 residues long: Chromatin structure-remodeling complex subunit rsc4 (542 aa).

Residues 6–116 (HNAPFDKTKF…NTANSLESKD (111 aa)) enclose the Bromo 1 domain. Disordered stretches follow at residues 114-139 (SKDGTLNEEENEEMESSINEEHKPGT) and 246-327 (ISSF…PIPE). The span at 119–128 (LNEEENEEME) shows a compositional bias: acidic residues. A Bromo 2 domain is found at 139 to 249 (TNEIDVPKVI…QLSSSLISSF (111 aa)). Residues 252-266 (QPKEHSPATSKHEPE) are compositionally biased toward basic and acidic residues. Phosphoserine is present on residues Ser-257, Ser-271, Ser-287, and Ser-313. The segment covering 268–280 (TPASPTPSVSAST) has biased composition (low complexity). The span at 286-298 (TSVAPSFITSDQA) shows a compositional bias: polar residues. The span at 304 to 322 (LKSEEAHVESFSKESEKDQ) shows a compositional bias: basic and acidic residues.

In terms of assembly, component of the RSC complex composed of at least arp9, arp42, rsc1, rsc4, rsc7, rsc9, rsc58, sfh1, snf21, ssr1, ssr2, ssr3 and ssr4. The complex interacts with histone and histone variant components of centromeric chromatin.

The protein resides in the nucleus. Functionally, component of the chromatin structure remodeling complex (RSC), which is involved in transcription regulation and nucleosome positioning. Controls particularly membrane and organelle development genes. This Schizosaccharomyces pombe (strain 972 / ATCC 24843) (Fission yeast) protein is Chromatin structure-remodeling complex subunit rsc4 (rsc4).